The following is a 398-amino-acid chain: DNA replication and repair protein RecF (398 aa).

30-37 is an ATP binding site; sequence GRNGFGKT.

Belongs to the RecF family.

It localises to the cytoplasm. In terms of biological role, the RecF protein is involved in DNA metabolism; it is required for DNA replication and normal SOS inducibility. RecF binds preferentially to single-stranded, linear DNA. It also seems to bind ATP. The chain is DNA replication and repair protein RecF from Corynebacterium efficiens (strain DSM 44549 / YS-314 / AJ 12310 / JCM 11189 / NBRC 100395).